Here is a 135-residue protein sequence, read N- to C-terminus: Large ribosomal subunit protein uL16c (135 aa).

It belongs to the universal ribosomal protein uL16 family. As to quaternary structure, part of the 50S ribosomal subunit.

The protein resides in the plastid. The protein localises to the chloroplast. In Stigeoclonium helveticum (Green alga), this protein is Large ribosomal subunit protein uL16c.